The sequence spans 145 residues: Androgenic gland hormone (145 aa).

Positions 1–21 are cleaved as a signal peptide; that stretch reads MKGLLFIVSLLCLTLHQRVWA. 4 disulfides stabilise this stretch: Cys33/Cys122, Cys42/Cys59, Cys44/Cys140, and Cys123/Cys131. Positions 68-112 are cleaved as a propeptide — c peptide; it reads SADDEDYLFEEDEDDEFFHPRALSPPAAKSGDERLEDEVSFHSRS. N-linked (GlcNAc...) asparagine glycosylation is present at Asn132.

As to expression, androgenic gland.

The protein localises to the secreted. Functionally, controls sex differentiation and the formation of male appendages, spermatogenesis, pigmentation, and male specific behavior. This chain is Androgenic gland hormone (AGH), found in Porcellio scaber (Common rough woodlouse).